The following is a 331-amino-acid chain: Cysteine and histidine-rich domain-containing protein 1 (331 aa).

Residue A2 is modified to N-acetylalanine. The tract at residues A2–V77 is interaction with PPP5C. 6 residues coordinate Zn(2+): C5, C10, C24, H27, C42, and C43. CHORD domains are found at residues C5–H64 and C157–H216. The residue at position 47 (T47) is a Phosphothreonine. S51 is modified (phosphoserine). C59, H64, C157, C162, C176, H179, C194, C195, C211, and H216 together coordinate Zn(2+). Residues G62–K82 are disordered. Over residues H64–K82 the composition is skewed to basic and acidic residues. The tract at residues N65–E316 is interaction with HSP90AA1 and HSP90AB1. The region spanning V227–E316 is the CS domain.

Interacts with HSP90AA1, HSP90AB1, PPP5C, ROCK1 and ROCK2.

Its function is as follows. Regulates centrosome duplication, probably by inhibiting the kinase activity of ROCK2. Proposed to act as co-chaperone for HSP90. May play a role in the regulation of NOD1 via a HSP90 chaperone complex. In vitro, has intrinsic chaperone activity. This function may be achieved by inhibiting association of ROCK2 with NPM1. Plays a role in ensuring the localization of the tyrosine kinase receptor EGFR to the plasma membrane, and thus ensures the subsequent regulation of EGFR activity and EGF-induced actin cytoskeleton remodeling. Involved in stress response. Prevents tumorigenesis. This is Cysteine and histidine-rich domain-containing protein 1 (Chordc1) from Rattus norvegicus (Rat).